Here is a 1067-residue protein sequence, read N- to C-terminus: Probable importin subunit beta-4 (1067 aa).

The Importin N-terminal domain occupies 27–94 (ATRALETKYL…RSNLLDITLK (68 aa)). HEAT repeat units lie at residues 159–196 (KLLL…VLES), 379–416 (GNLP…EIPT), 420–457 (KHHA…GLDK), 591–633 (PFLE…SVET), 890–927 (PFTR…FSTE), and 1013–1050 (QHLG…EIAP).

It belongs to the importin beta family.

Its subcellular location is the cytoplasm. It is found in the nucleus. The protein localises to the nucleus envelope. Functionally, required for nuclear protein import, its predominant substrate seems to be ribosomal proteins. Binds to nucleoporins and the GTP-bound form of gsp1 (Ran). The polypeptide is Probable importin subunit beta-4 (kap123) (Schizosaccharomyces pombe (strain 972 / ATCC 24843) (Fission yeast)).